The chain runs to 217 residues: Small ribosomal subunit protein uS3c (217 aa).

One can recognise a KH type-2 domain in the interval 47–119 (VRTHIKSSSN…KLHIAIEKVA (73 aa)).

Belongs to the universal ribosomal protein uS3 family. Part of the 30S ribosomal subunit.

Its subcellular location is the plastid. It localises to the chloroplast. The protein is Small ribosomal subunit protein uS3c (rps3) of Pinus thunbergii (Japanese black pine).